The primary structure comprises 126 residues: MLCPALLCAALLLLTPVEITDARALQQPSDAAQFMEQFLESYNDLLTLDDLENMLNSHPEDQSNLSSSKADEYPKWAEADTPWLRLLRGALANQKRAEPDRSRRGWNRGCFGLKLDRIGSMSGLGC.

Residues 1–22 (MLCPALLCAALLLLTPVEITDA) form the signal peptide. The propeptide occupies 23–104 (RALQQPSDAA…KRAEPDRSRR (82 aa)). The cysteines at positions 110 and 126 are disulfide-linked.

It belongs to the natriuretic peptide family.

The protein localises to the secreted. Functionally, exhibits natriuretic and vasodepressant activity. Has cGMP-stimulating activity. May help to regulate body fluid homeostasis in a variety of aquatic environments. In Takifugu rubripes (Japanese pufferfish), this protein is C-type natriuretic peptide 1.